Reading from the N-terminus, the 284-residue chain is MACTENGLAGHSHSPIIVPVDKNRSKETCHNVQLRSLSSMLKDDEDDADVWTRPPVSLRPPFNVPRTGARIPQNPRAPRHPLTLTPAIEEESLATAEINSSEGLESQSQKGHDSINMSQEFSGSPMALMIGGPRVGSRVLERSGNNSKPYIPVPRSQGFFPPRGSQSRGPPYIPTLRSGIMMEVTPGNARMANRGNMAHVSFPLGSPRHPMDNWQQSPSLPLSPSITGLPCSSAHCFLPPQAPAFNPFPVMPTAFASPLRFGPPLLPYVFHYNTGAMYPPPYLN.

Disordered stretches follow at residues 59 to 80 (RPPF…APRH), 97 to 119 (EINS…NMSQ), and 143 to 171 (SGNN…RGPP).

The polypeptide is Proline-rich protein 32 (Prr32) (Mus musculus (Mouse)).